Here is a 93-residue protein sequence, read N- to C-terminus: Corticostatin 1 (93 aa).

The N-terminal stretch at 1–19 (MRTLILLAAILLAALQAQA) is a signal peptide. Residues 20-59 (ELFSVNVDEVLDQQQPGSDQDLVIHLTGEESSALQVPDTK) constitute a propeptide that is removed on maturation. Cystine bridges form between Cys-62–Cys-90, Cys-64–Cys-79, and Cys-69–Cys-89.

This sequence belongs to the alpha-defensin family.

The protein localises to the secreted. Functionally, microbicidal activity and inhibits corticotropin (ACTH) stimulated corticosterone production. The chain is Corticostatin 1 from Oryctolagus cuniculus (Rabbit).